Consider the following 188-residue polypeptide: Peptidyl-tRNA hydrolase (188 aa).

Residue Phe15 coordinates tRNA. The active-site Proton acceptor is His20. Tyr64, Asn66, and Asn112 together coordinate tRNA.

Belongs to the PTH family. In terms of assembly, monomer.

The protein resides in the cytoplasm. The catalysed reaction is an N-acyl-L-alpha-aminoacyl-tRNA + H2O = an N-acyl-L-amino acid + a tRNA + H(+). In terms of biological role, hydrolyzes ribosome-free peptidyl-tRNAs (with 1 or more amino acids incorporated), which drop off the ribosome during protein synthesis, or as a result of ribosome stalling. Its function is as follows. Catalyzes the release of premature peptidyl moieties from peptidyl-tRNA molecules trapped in stalled 50S ribosomal subunits, and thus maintains levels of free tRNAs and 50S ribosomes. The chain is Peptidyl-tRNA hydrolase from Borrelia duttonii (strain Ly).